A 102-amino-acid chain; its full sequence is Small ribosomal subunit protein uS10 (102 aa).

It belongs to the universal ribosomal protein uS10 family. Part of the 30S ribosomal subunit.

In terms of biological role, involved in the binding of tRNA to the ribosomes. The protein is Small ribosomal subunit protein uS10 of Geobacillus kaustophilus (strain HTA426).